Reading from the N-terminus, the 57-residue chain is Large ribosomal subunit protein uL30 (57 aa).

It belongs to the universal ribosomal protein uL30 family. As to quaternary structure, part of the 50S ribosomal subunit.

This chain is Large ribosomal subunit protein uL30, found in Clostridium perfringens (strain ATCC 13124 / DSM 756 / JCM 1290 / NCIMB 6125 / NCTC 8237 / Type A).